The primary structure comprises 1035 residues: Beta-galactosidase (1035 aa).

Residues Asn-101 and Asp-199 each coordinate substrate. Residue Asp-199 coordinates Na(+). Residues Glu-415, His-417, and Glu-460 each contribute to the Mg(2+) site. Substrate-binding positions include Glu-460 and 540-543; that span reads EYAH. The active-site Proton donor is the Glu-460. Glu-540 serves as the catalytic Nucleophile. Asn-600 contacts Mg(2+). Na(+) contacts are provided by Phe-604 and Asn-607. Residues Asn-607 and Trp-1011 each coordinate substrate.

This sequence belongs to the glycosyl hydrolase 2 family. Homotetramer. Mg(2+) is required as a cofactor. Requires Na(+) as cofactor.

The catalysed reaction is Hydrolysis of terminal non-reducing beta-D-galactose residues in beta-D-galactosides.. The sequence is that of Beta-galactosidase from Psychromonas ingrahamii (strain DSM 17664 / CCUG 51855 / 37).